The sequence spans 156 residues: ATP synthase subunit b (156 aa).

The chain crosses the membrane as a helical span at residues 11 to 31 (AIAFVLFVLFCMKYVWPPLMA).

This sequence belongs to the ATPase B chain family. As to quaternary structure, F-type ATPases have 2 components, F(1) - the catalytic core - and F(0) - the membrane proton channel. F(1) has five subunits: alpha(3), beta(3), gamma(1), delta(1), epsilon(1). F(0) has three main subunits: a(1), b(2) and c(10-14). The alpha and beta chains form an alternating ring which encloses part of the gamma chain. F(1) is attached to F(0) by a central stalk formed by the gamma and epsilon chains, while a peripheral stalk is formed by the delta and b chains.

Its subcellular location is the cell inner membrane. In terms of biological role, f(1)F(0) ATP synthase produces ATP from ADP in the presence of a proton or sodium gradient. F-type ATPases consist of two structural domains, F(1) containing the extramembraneous catalytic core and F(0) containing the membrane proton channel, linked together by a central stalk and a peripheral stalk. During catalysis, ATP synthesis in the catalytic domain of F(1) is coupled via a rotary mechanism of the central stalk subunits to proton translocation. Its function is as follows. Component of the F(0) channel, it forms part of the peripheral stalk, linking F(1) to F(0). This Sodalis glossinidius (strain morsitans) protein is ATP synthase subunit b.